The following is a 4022-amino-acid chain: Intermembrane lipid transfer protein VPS13B (4022 aa).

The 101-residue stretch at 2–102 folds into the Chorein N-terminal domain; that stretch reads LESYVTPILM…KDGIQDDHES (101 aa). Residues 100–134 are disordered; that stretch reads HESCGSNSTNRSTAESTKSSIKPRRMQQAAPTDPD. Positions 103–119 are enriched in polar residues; the sequence is CGSNSTNRSTAESTKSS. Residues S414, S999, S1002, and S1033 each carry the phosphoserine modification. A disordered region spans residues 1247–1314; the sequence is NLSPTSPETM…SVTLEQTTSN (68 aa). 2 stretches are compositionally biased toward polar residues: residues 1264–1292 and 1302–1314; these read PVRS…TEGD and FSDS…TTSN. At S1815 the chain carries Phosphoserine. A compositionally biased stretch (basic and acidic residues) spans 1860 to 1872; the sequence is KSQEQKNNEKTDK. The tract at residues 1860 to 1880 is disordered; that stretch reads KSQEQKNNEKTDKSSLNLPEV. The 86-residue stretch at 2631–2716 folds into the SHR-BD domain; the sequence is HFVICNDTQE…RTASLIIKVQ (86 aa). The interval 3908-4022 is localizes the protein to the Golgi apparatus; it reads AFPVTEIDCA…KNKALRKGFP (115 aa).

Belongs to the VPS13 family. Interacts with STX6. Interacts with STX12. Interacts with RAB6A isoform 1 (GTP-bound) and isoform 2 (GTP-bound). Interacts with RAB6B (GTP-bound). In terms of tissue distribution, widely expressed. There is apparent differential expression of different transcripts. In fetal brain, lung, liver, and kidney, two transcripts of 2 and 5 kb are identified. These transcripts are also seen in all adult tissues analyzed. A larger transcript (12-14 kb) is expressed in prostate, testis, ovary, and colon in the adult. Expression is very low in adult brain tissue. Expressed in peripheral blood lymphocytes. Isoform 1 and isoform 2 are expressed in brain and retina. Isoform 2 is expressed ubiquitously.

It is found in the recycling endosome membrane. It localises to the cytoplasmic vesicle. Its subcellular location is the secretory vesicle. The protein resides in the acrosome membrane. The protein localises to the golgi apparatus. It is found in the cis-Golgi network membrane. It localises to the endoplasmic reticulum-Golgi intermediate compartment membrane. Its subcellular location is the trans-Golgi network membrane. The protein resides in the early endosome membrane. The protein localises to the lysosome membrane. Its function is as follows. Mediates the transfer of lipids between membranes at organelle contact sites. Binds phosphatidylinositol 3-phosphate. Functions as a tethering factor in the slow endocytic recycling pathway, to assist traffic between early and recycling endosomes. Involved in the transport of proacrosomal vesicles to the nuclear dense lamina (NDL) during spermatid development. Plays a role in the assembly of the Golgi apparatus, possibly by mediating trafficking to the Golgi membrane. Plays a role in the development of the nervous system, and may be required for neuron projection development. May also play a role during adipose tissue development. Required for maintenance of the ocular lens. The sequence is that of Intermembrane lipid transfer protein VPS13B (VPS13B) from Homo sapiens (Human).